A 455-amino-acid polypeptide reads, in one-letter code: tRNA modification GTPase MnmE (455 aa).

Residues R24, E81, and K121 each contribute to the (6S)-5-formyl-5,6,7,8-tetrahydrofolate site. One can recognise a TrmE-type G domain in the interval 217-378 (GMKVVIAGRP…LKEHLKDIMG (162 aa)). N227 contributes to the K(+) binding site. GTP is bound by residues 227–232 (NAGKSS), 246–252 (TDIAGTT), 271–274 (DTAG), and 336–339 (NKAD). S231 lines the Mg(2+) pocket. Residues T246, I248, and T251 each contribute to the K(+) site. A Mg(2+)-binding site is contributed by T252. Residue K455 coordinates (6S)-5-formyl-5,6,7,8-tetrahydrofolate.

The protein belongs to the TRAFAC class TrmE-Era-EngA-EngB-Septin-like GTPase superfamily. TrmE GTPase family. In terms of assembly, homodimer. Heterotetramer of two MnmE and two MnmG subunits. The cofactor is K(+).

It localises to the cytoplasm. In terms of biological role, exhibits a very high intrinsic GTPase hydrolysis rate. Involved in the addition of a carboxymethylaminomethyl (cmnm) group at the wobble position (U34) of certain tRNAs, forming tRNA-cmnm(5)s(2)U34. This is tRNA modification GTPase MnmE from Psychromonas ingrahamii (strain DSM 17664 / CCUG 51855 / 37).